The chain runs to 472 residues: Hepatocyte nuclear factor 3-alpha (472 aa).

Residues 169 to 260 constitute a DNA-binding region (fork-head); sequence AKPPYSYISL…GNMFENGCYL (92 aa). Residues 269-392 form a disordered region; the sequence is EKQPGAGGGG…ESQLHLKGDP (124 aa). Over residues 273-289 the composition is skewed to gly residues; that stretch reads GAGGGGGSGSGGSGAKG. A phosphoserine mark is found at serine 307 and serine 331. Composition is skewed to low complexity over residues 322 to 332 and 351 to 366; these read GAPAPGPAASP and TPASSTAPPISSGPGA.

Binds DNA as a monomer. Interacts with FOXA2. Interacts with NKX2-1. Interacts with HDAC7. Interacts with the histone H3-H4 heterodimer. Associates with nucleosomes containing histone H2A. Interacts with AR. Interacts with NR0B2. Highly expressed in prostate and ESR1-positive breast tumors. Overexpressed in esophageal and lung adenocarcinomas.

The protein resides in the nucleus. Transcription factor that is involved in embryonic development, establishment of tissue-specific gene expression and regulation of gene expression in differentiated tissues. Is thought to act as a 'pioneer' factor opening the compacted chromatin for other proteins through interactions with nucleosomal core histones and thereby replacing linker histones at target enhancer and/or promoter sites. Binds DNA with the consensus sequence 5'-[AC]A[AT]T[AG]TT[GT][AG][CT]T[CT]-3'. Proposed to play a role in translating the epigenetic signatures into cell type-specific enhancer-driven transcriptional programs. Its differential recruitment to chromatin is dependent on distribution of histone H3 methylated at 'Lys-5' (H3K4me2) in estrogen-regulated genes. Involved in the development of multiple endoderm-derived organ systems such as liver, pancreas, lung and prostate; FOXA1 and FOXA2 seem to have at least in part redundant roles. Modulates the transcriptional activity of nuclear hormone receptors. Is involved in ESR1-mediated transcription; required for ESR1 binding to the NKX2-1 promoter in breast cancer cells; binds to the RPRM promoter and is required for the estrogen-induced repression of RPRM. Involved in regulation of apoptosis by inhibiting the expression of BCL2. Involved in cell cycle regulation by activating expression of CDKN1B, alone or in conjunction with BRCA1. Originally described as a transcription activator for a number of liver genes such as AFP, albumin, tyrosine aminotransferase, PEPCK, etc. Interacts with the cis-acting regulatory regions of these genes. Involved in glucose homeostasis. In Homo sapiens (Human), this protein is Hepatocyte nuclear factor 3-alpha (FOXA1).